Here is a 437-residue protein sequence, read N- to C-terminus: Adenylosuccinate synthetase (437 aa).

Residues 12-18 (GDEGKGK) and 40-42 (GHT) contribute to the GTP site. Aspartate 13 (proton acceptor) is an active-site residue. 2 residues coordinate Mg(2+): aspartate 13 and glycine 40. IMP-binding positions include 13 to 16 (DEGK), 38 to 41 (NAGH), threonine 131, arginine 145, glutamine 225, and threonine 240. Residue histidine 41 is the Proton donor of the active site. The disordered stretch occupies residues 281 to 304 (TELLGADGKPDADGERLGTRGHEF). Over residues 288–303 (GKPDADGERLGTRGHE) the composition is skewed to basic and acidic residues. Substrate is bound at residue 306–312 (TTTGRQR). Residue arginine 310 coordinates IMP. GTP is bound by residues arginine 312, 338–340 (KLD), and 420–422 (STS).

It belongs to the adenylosuccinate synthetase family. As to quaternary structure, homodimer. The cofactor is Mg(2+).

It is found in the cytoplasm. It carries out the reaction IMP + L-aspartate + GTP = N(6)-(1,2-dicarboxyethyl)-AMP + GDP + phosphate + 2 H(+). It functions in the pathway purine metabolism; AMP biosynthesis via de novo pathway; AMP from IMP: step 1/2. Functionally, plays an important role in the de novo pathway of purine nucleotide biosynthesis. Catalyzes the first committed step in the biosynthesis of AMP from IMP. This chain is Adenylosuccinate synthetase, found in Ruegeria sp. (strain TM1040) (Silicibacter sp.).